We begin with the raw amino-acid sequence, 62 residues long: uncharacterized protein (62 aa).

This is an uncharacterized protein from Saccharomyces cerevisiae (strain ATCC 204508 / S288c) (Baker's yeast).